The primary structure comprises 63 residues: UPF0391 membrane protein lpg2415 (63 aa).

The next 2 helical transmembrane spans lie at 4 to 24 and 33 to 53; these read WALI…RGVA and VLFF…LLGG.

It belongs to the UPF0391 family.

The protein resides in the cell membrane. This is UPF0391 membrane protein lpg2415 from Legionella pneumophila subsp. pneumophila (strain Philadelphia 1 / ATCC 33152 / DSM 7513).